The primary structure comprises 366 residues: Cobalt-precorrin-5B C(1)-methyltransferase (366 aa).

This sequence belongs to the CbiD family.

The catalysed reaction is Co-precorrin-5B + S-adenosyl-L-methionine = Co-precorrin-6A + S-adenosyl-L-homocysteine. It participates in cofactor biosynthesis; adenosylcobalamin biosynthesis; cob(II)yrinate a,c-diamide from sirohydrochlorin (anaerobic route): step 6/10. Its function is as follows. Catalyzes the methylation of C-1 in cobalt-precorrin-5B to form cobalt-precorrin-6A. This chain is Cobalt-precorrin-5B C(1)-methyltransferase, found in Thermus thermophilus (strain ATCC BAA-163 / DSM 7039 / HB27).